A 413-amino-acid chain; its full sequence is Serine/threonine-protein kinase SSN3 (413 aa).

The 330-residue stretch at 26 to 355 folds into the Protein kinase domain; that stretch reads YHIVGFISSG…AQEALEHPYF (330 aa). Residues 32–40 and Lys56 contribute to the ATP site; that span reads ISSGTYGRV. Catalysis depends on Asp158, which acts as the Proton acceptor. Residues 376–385 are compositionally biased toward basic and acidic residues; it reads RRVTQDDNDI. The tract at residues 376–413 is disordered; it reads RRVTQDDNDIRSGSLPGTKRSGLPDDSLMGRASKRLKE.

This sequence belongs to the protein kinase superfamily. CMGC Ser/Thr protein kinase family. CDC2/CDKX subfamily. As to quaternary structure, component of the srb8-11 complex, a regulatory module of the Mediator complex. Mg(2+) serves as cofactor.

Its subcellular location is the nucleus. It carries out the reaction L-seryl-[protein] + ATP = O-phospho-L-seryl-[protein] + ADP + H(+). It catalyses the reaction L-threonyl-[protein] + ATP = O-phospho-L-threonyl-[protein] + ADP + H(+). The enzyme catalyses [DNA-directed RNA polymerase] + ATP = phospho-[DNA-directed RNA polymerase] + ADP + H(+). In terms of biological role, component of the srb8-11 complex. The srb8-11 complex is a regulatory module of the Mediator complex which is itself involved in regulation of basal and activated RNA polymerase II-dependent transcription. The srb8-11 complex may be involved in the transcriptional repression of a subset of genes regulated by Mediator. It may inhibit the association of the Mediator complex with RNA polymerase II to form the holoenzyme complex. The srb8-11 complex phosphorylates the C-terminal domain (CTD) of the largest subunit of RNA polymerase II. The protein is Serine/threonine-protein kinase SSN3 (ssn3) of Aspergillus oryzae (strain ATCC 42149 / RIB 40) (Yellow koji mold).